A 196-amino-acid chain; its full sequence is MLARGPWTWKYALPPAVVGVAALAASSPWGVVGVALAAFVVWFHRDPDRSPNGAGVVVPADGTVSVIRTRDDGRVRVGVFMNVHNVHVNRVPVAGRVESVVHEPGGHRPAFSKESAHNERVRIETAEWTVVLIAGAFARRIHPYVEAGEDLARGDRLGHISFGSRADVVLPPAYDRGDVVVESGQTVRAGETVLAR.

S164 acts as the Schiff-base intermediate with substrate; via pyruvic acid in catalysis. The residue at position 164 (S164) is a Pyruvic acid (Ser); by autocatalysis.

This sequence belongs to the phosphatidylserine decarboxylase family. PSD-A subfamily. In terms of assembly, heterodimer of a large membrane-associated beta subunit and a small pyruvoyl-containing alpha subunit. The cofactor is pyruvate. Is synthesized initially as an inactive proenzyme. Formation of the active enzyme involves a self-maturation process in which the active site pyruvoyl group is generated from an internal serine residue via an autocatalytic post-translational modification. Two non-identical subunits are generated from the proenzyme in this reaction, and the pyruvate is formed at the N-terminus of the alpha chain, which is derived from the carboxyl end of the proenzyme. The post-translation cleavage follows an unusual pathway, termed non-hydrolytic serinolysis, in which the side chain hydroxyl group of the serine supplies its oxygen atom to form the C-terminus of the beta chain, while the remainder of the serine residue undergoes an oxidative deamination to produce ammonia and the pyruvoyl prosthetic group on the alpha chain.

Its subcellular location is the cell membrane. It catalyses the reaction archaetidylserine + H(+) = archaetidylethanolamine + CO2. In terms of biological role, catalyzes the formation of archaetidylethanolamine (PtdEtn) from archaetidylserine (PtdSer). This chain is Putative archaetidylserine decarboxylase proenzyme, found in Halobacterium salinarum (strain ATCC 700922 / JCM 11081 / NRC-1) (Halobacterium halobium).